The chain runs to 383 residues: E3 ubiquitin-protein ligase KCMF1 (383 aa).

Residues 4-60 (HEGVSCDACLKGNFRGRRYKCLICYDYDLCASCYESGATTTRHTTEHPMQCILTRVD) form a ZZ-type zinc finger. The Zn(2+) site is built by cysteine 9, cysteine 12, cysteine 24, cysteine 27, cysteine 33, cysteine 36, histidine 46, and histidine 50. Residues 78 to 101 (FTCPYCGKMGYTETSLQEHVTSEH) form a C2H2-type zinc finger. Disordered regions lie at residues 141–194 (DLDE…PSNR) and 242–289 (AQAA…LASH). 2 stretches are compositionally biased toward low complexity: residues 175 to 192 (SSSTGGLSSSQSSSYSPS) and 260 to 279 (SNPSNISASIPPPSTATNTA). Residues 224–261 (SASQLQQLQMQLQLERQQAQAARQQLETARNATRQRSN) adopt a coiled-coil conformation. Residues 280 to 289 (MTESNPLASH) show a composition bias toward polar residues.

It belongs to the KCMF1 family. In terms of assembly, component of the SIFI complex, composed of kcmf1, ubr4 and calmodulin.

It is found in the cytoplasm. The protein resides in the late endosome. It localises to the lysosome. It catalyses the reaction S-ubiquitinyl-[E2 ubiquitin-conjugating enzyme]-L-cysteine + [acceptor protein]-L-lysine = [E2 ubiquitin-conjugating enzyme]-L-cysteine + N(6)-ubiquitinyl-[acceptor protein]-L-lysine.. It functions in the pathway protein modification; protein ubiquitination. E3 ubiquitin-protein ligase which accepts ubiquitin from an E2 ubiquitin-conjugating enzyme and then transfers it to targeted substrates, promoting their degradation by the proteasome. Together with UBR4, component of the N-end rule pathway: ubiquitinates proteins bearing specific N-terminal residues that are destabilizing according to the N-end rule, leading to their degradation. Does not ubiquitinate proteins that are acetylated at the N-terminus. Together with ubr4, part of a protein quality control pathway that catalyzes ubiquitination and degradation of proteins that have been oxidized in response to reactive oxygen species (ROS): recognizes proteins with an Arg-CysO3(H) degron at the N-terminus, and mediates assembly of heterotypic 'Lys-63'-/'Lys-27'-linked branched ubiquitin chains on oxidized proteins, leading to their degradation by autophagy. Catalytic component of the SIFI complex, a multiprotein complex required to inhibit the mitochondrial stress response after a specific stress event has been resolved: ubiquitinates and degrades (1) components of the HRI-mediated signaling of the integrated stress response, such as dele1 and eif2ak1/hri, as well as (2) unimported mitochondrial precursors. Within the SIFI complex, ubr4 initiates ubiquitin chain that are further elongated or branched by kcmf1. The chain is E3 ubiquitin-protein ligase KCMF1 (kcmf1) from Danio rerio (Zebrafish).